The sequence spans 1039 residues: Isoleucine--tRNA ligase (1039 aa).

The 'HIGH' region signature appears at 46-56 (PYCSGAIHLGT). A 'KMSKS' region motif is present at residues 600–604 (KMSKS). Lysine 603 serves as a coordination point for ATP.

The protein belongs to the class-I aminoacyl-tRNA synthetase family. IleS type 2 subfamily. Monomer. It depends on Zn(2+) as a cofactor.

Its subcellular location is the cytoplasm. The catalysed reaction is tRNA(Ile) + L-isoleucine + ATP = L-isoleucyl-tRNA(Ile) + AMP + diphosphate. Its function is as follows. Catalyzes the attachment of isoleucine to tRNA(Ile). As IleRS can inadvertently accommodate and process structurally similar amino acids such as valine, to avoid such errors it has two additional distinct tRNA(Ile)-dependent editing activities. One activity is designated as 'pretransfer' editing and involves the hydrolysis of activated Val-AMP. The other activity is designated 'posttransfer' editing and involves deacylation of mischarged Val-tRNA(Ile). The polypeptide is Isoleucine--tRNA ligase (Methanocaldococcus jannaschii (strain ATCC 43067 / DSM 2661 / JAL-1 / JCM 10045 / NBRC 100440) (Methanococcus jannaschii)).